The sequence spans 293 residues: MPSQPSSQDKAKILAEALPYIQRFHGKTIVIKYGGNAMTEENLKKCFAHDVALLKVVGMNPVIVHGGGPQINDMLKRVGKQGAFIQGMRVTDAETMDVVEMVLGLINKEIVNLINQHGGRAVGLTGKDGSFIRAKKMLVRDKERGQEWVDLGQVGEIEGIDPALIELLETRDFIPVIAPVGVGSRGESYNINADLVAGGLALVLNAEKLILLTNTPGVLNKDGSLLTGLTAQEVDELIADGTISGGMIPKISSALDAVKSGVKTCHIIDGRVEHGLLLEVLTDEGVGTLIKAN.

Residues 67–68, Arg89, and Asn190 contribute to the substrate site; that span reads GG.

Belongs to the acetylglutamate kinase family. ArgB subfamily.

Its subcellular location is the cytoplasm. The enzyme catalyses N-acetyl-L-glutamate + ATP = N-acetyl-L-glutamyl 5-phosphate + ADP. It participates in amino-acid biosynthesis; L-arginine biosynthesis; N(2)-acetyl-L-ornithine from L-glutamate: step 2/4. In terms of biological role, catalyzes the ATP-dependent phosphorylation of N-acetyl-L-glutamate. The sequence is that of Acetylglutamate kinase from Nitrosospira multiformis (strain ATCC 25196 / NCIMB 11849 / C 71).